Consider the following 292-residue polypeptide: Sulfofructosephosphate aldolase (292 aa).

The active-site Schiff-base intermediate with substrate is the lysine 193.

Belongs to the aldolase LacD family. Homotetramer.

It catalyses the reaction 6-deoxy-6-sulfo-D-fructose 1-phosphate = (2S)-3-sulfolactaldehyde + dihydroxyacetone phosphate. Cleaves 6-deoxy-6-sulfo-D-fructose 1-phosphate (SFP) to form dihydroxyacetone phosphate (DHAP) and 3-sulfolactaldehyde (SLA). The protein is Sulfofructosephosphate aldolase (yihT) of Escherichia coli O157:H7.